The following is a 178-amino-acid chain: Ribulose bisphosphate carboxylase small subunit, chloroplastic 2 (178 aa).

The transit peptide at Met-1–Gln-54 directs the protein to the chloroplast.

This sequence belongs to the RuBisCO small chain family. Heterohexadecamer of 8 large and 8 small subunits.

It is found in the plastid. The protein resides in the chloroplast. In terms of biological role, ruBisCO catalyzes two reactions: the carboxylation of D-ribulose 1,5-bisphosphate, the primary event in carbon dioxide fixation, as well as the oxidative fragmentation of the pentose substrate. Both reactions occur simultaneously and in competition at the same active site. Although the small subunit is not catalytic it is essential for maximal activity. The sequence is that of Ribulose bisphosphate carboxylase small subunit, chloroplastic 2 from Flaveria pringlei.